We begin with the raw amino-acid sequence, 1400 residues long: DNA topoisomerase 2 (1400 aa).

The segment covering 1–30 has biased composition (low complexity); it reads MSSFESDSASDAESAFSDASSDFTPSSSVK. The disordered stretch occupies residues 1–57; that stretch reads MSSFESDSASDAESAFSDASSDFTPSSSVKSKGKVPLRDSTNTTAQPSAPATGDASD. The segment covering 39 to 57 has biased composition (polar residues); the sequence is DSTNTTAQPSAPATGDASD. ATP-binding positions include Asn117, Asn146, 174–176, and 187–194; these read SSN and GRNGYGAK. The interval 379–386 is interaction with DNA; sequence TKKEKGKK. 415-417 lines the ATP pocket; it reads QTK. Positions 497–613 constitute a Toprim domain; that stretch reads CTLILTEGDS…GLLEIPGFLL (117 aa). Mg(2+) contacts are provided by Glu503, Asp582, and Asp584. The region spanning 749–1214 is the Topo IIA-type catalytic domain; the sequence is IPSILDGFKP…SAKDLWNSDL (466 aa). The O-(5'-phospho-DNA)-tyrosine intermediate role is filled by Tyr839. The tract at residues 1019 to 1028 is interaction with DNA; it reads KLISSISLSN. The interval 1235-1400 is disordered; it reads FGPTAKTSTR…NESDEDYMSE (166 aa). The span at 1262–1271 shows a compositional bias: low complexity; sequence SSTPKASTPT. Positions 1312–1321 are enriched in basic residues; the sequence is PKRKTPKSKP. A compositionally biased stretch (acidic residues) spans 1389 to 1400; sequence DGNESDEDYMSE.

This sequence belongs to the type II topoisomerase family. In terms of assembly, homodimer. Mg(2+) is required as a cofactor. The cofactor is Mn(2+). It depends on Ca(2+) as a cofactor.

It is found in the nucleus. The catalysed reaction is ATP-dependent breakage, passage and rejoining of double-stranded DNA.. In terms of biological role, control of topological states of DNA by transient breakage and subsequent rejoining of DNA strands. Topoisomerase II makes double-strand breaks. The polypeptide is DNA topoisomerase 2 (TOP2) (Meyerozyma guilliermondii (strain ATCC 6260 / CBS 566 / DSM 6381 / JCM 1539 / NBRC 10279 / NRRL Y-324) (Yeast)).